The chain runs to 653 residues: UvrABC system protein B (653 aa).

Residues E25 to S182 enclose the Helicase ATP-binding domain. G38–T45 is a binding site for ATP. A Beta-hairpin motif is present at residues Y91–I114. The region spanning Q429–V591 is the Helicase C-terminal domain. In terms of domain architecture, UVR spans E616–H651.

This sequence belongs to the UvrB family. In terms of assembly, forms a heterotetramer with UvrA during the search for lesions. Interacts with UvrC in an incision complex.

Its subcellular location is the cytoplasm. In terms of biological role, the UvrABC repair system catalyzes the recognition and processing of DNA lesions. A damage recognition complex composed of 2 UvrA and 2 UvrB subunits scans DNA for abnormalities. Upon binding of the UvrA(2)B(2) complex to a putative damaged site, the DNA wraps around one UvrB monomer. DNA wrap is dependent on ATP binding by UvrB and probably causes local melting of the DNA helix, facilitating insertion of UvrB beta-hairpin between the DNA strands. Then UvrB probes one DNA strand for the presence of a lesion. If a lesion is found the UvrA subunits dissociate and the UvrB-DNA preincision complex is formed. This complex is subsequently bound by UvrC and the second UvrB is released. If no lesion is found, the DNA wraps around the other UvrB subunit that will check the other stand for damage. This is UvrABC system protein B from Anaplasma phagocytophilum (strain HZ).